Reading from the N-terminus, the 398-residue chain is tRNA-specific 2-thiouridylase MnmA (398 aa).

ATP is bound by residues 18–25 (AMSGGVDS) and Leu-44. Cys-112 acts as the Nucleophile in catalysis. A disulfide bond links Cys-112 and Cys-213. Gly-136 is an ATP binding site. The tract at residues 163–165 (RDQ) is interaction with tRNA. Residue Cys-213 is the Cysteine persulfide intermediate of the active site.

The protein belongs to the MnmA/TRMU family.

It localises to the cytoplasm. The catalysed reaction is S-sulfanyl-L-cysteinyl-[protein] + uridine(34) in tRNA + AH2 + ATP = 2-thiouridine(34) in tRNA + L-cysteinyl-[protein] + A + AMP + diphosphate + H(+). Functionally, catalyzes the 2-thiolation of uridine at the wobble position (U34) of tRNA, leading to the formation of s(2)U34. In Sinorhizobium fredii (strain NBRC 101917 / NGR234), this protein is tRNA-specific 2-thiouridylase MnmA.